The sequence spans 642 residues: Assimilatory sulfite reductase (ferredoxin), chloroplastic (642 aa).

Residues Met-1–Ala-61 constitute a chloroplast transit peptide. Positions Pro-46–Arg-74 are disordered. Residues Cys-503, Cys-509, Cys-549, and Cys-553 each coordinate [4Fe-4S] cluster. Cys-553 contributes to the siroheme binding site.

This sequence belongs to the nitrite and sulfite reductase 4Fe-4S domain family. Monomer. Interacts with ferredoxin. Siroheme is required as a cofactor. It depends on [4Fe-4S] cluster as a cofactor. Post-translationally, phosphorylated; this phosphorylation reduces DNA-binding. As to expression, present in leaves and roots.

It is found in the plastid. Its subcellular location is the chloroplast stroma. The protein localises to the chloroplast nucleoid. It localises to the plastid stroma. It carries out the reaction hydrogen sulfide + 6 oxidized [2Fe-2S]-[ferredoxin] + 3 H2O = sulfite + 6 reduced [2Fe-2S]-[ferredoxin] + 7 H(+). Functionally, essential protein with sulfite reductase activity required in assimilatory sulfate reduction pathway during both primary and secondary metabolism and thus involved in development and growth. DNA-binding protein that binds to both double-stranded and single-stranded DNA without significant sequence specificity to reversibly repress the transcriptional activity of chloroplast nucleoids by promoting DNA compaction and possibly regulate DNA replication. This Arabidopsis thaliana (Mouse-ear cress) protein is Assimilatory sulfite reductase (ferredoxin), chloroplastic (SIR).